Here is a 251-residue protein sequence, read N- to C-terminus: DNA repair protein RecO (251 aa).

Belongs to the RecO family.

In terms of biological role, involved in DNA repair and RecF pathway recombination. This chain is DNA repair protein RecO, found in Nitratidesulfovibrio vulgaris (strain ATCC 29579 / DSM 644 / CCUG 34227 / NCIMB 8303 / VKM B-1760 / Hildenborough) (Desulfovibrio vulgaris).